The primary structure comprises 554 residues: MREETEPSERTLGLTPTWSVATVLTIFVFVSLIVERSIHRLSNWLQKTKRKPLFAALEKMKEELMLLGFISLLLTATSSTIANICVSSSFHNDRFVPCTPSEINEELESTISTVKRTQLTRSLFLHTLRRRLSGIGEDTCSEGHEPFLSYEGMEQLHRFIFIMAVTHVTYSCLTMLLAIVKIHRWRIWEDEVHMDRNDCLTVVAREKIFRRQTTFVQYHTSAPLVKNRLLIWVICFFRQFGHSVVRSDYLTLRKGFIMNHHLTLTYDFHSYMIRSMEEEFQKIVGVSGPLWGFVVGFMLFNIKGSNLYFWLAIIPITLVLLVGAKLQHVIATLALENASITEYASGIKLRPRDELFWFKKPELLLSLIHFIQFQNAFELASFFWFWWQFGYNSCFLRNHLLVYLRLILGFSGQFLCSYSTLPLYALVTQMGTNYKAALLPQRVRETINGWGKATRRKRRHGLYGDDSTIRTETSTIASVDEYNDQVLDVSETSPVQDNELELQLIRGACGNSSSVETPILRPCASISSTTFSRLQTETTDSLSRSSSLPMRREC.

The Extracellular portion of the chain corresponds to 1-13; it reads MREETEPSERTLG. The helical transmembrane segment at 14–34 threads the bilayer; sequence LTPTWSVATVLTIFVFVSLIV. The Cytoplasmic portion of the chain corresponds to 35–63; sequence ERSIHRLSNWLQKTKRKPLFAALEKMKEE. The chain crosses the membrane as a helical span at residues 64-84; that stretch reads LMLLGFISLLLTATSSTIANI. Over 85 to 158 the chain is Extracellular; it reads CVSSSFHNDR…SYEGMEQLHR (74 aa). Residues 159 to 179 form a helical membrane-spanning segment; the sequence is FIFIMAVTHVTYSCLTMLLAI. The Cytoplasmic portion of the chain corresponds to 180–281; that stretch reads VKIHRWRIWE…MIRSMEEEFQ (102 aa). Residues 282-302 form a helical membrane-spanning segment; the sequence is KIVGVSGPLWGFVVGFMLFNI. K303 is a topological domain (extracellular). The chain crosses the membrane as a helical span at residues 304-324; it reads GSNLYFWLAIIPITLVLLVGA. At 325–366 the chain is on the cytoplasmic side; that stretch reads KLQHVIATLALENASITEYASGIKLRPRDELFWFKKPELLLS. A helical transmembrane segment spans residues 367-387; it reads LIHFIQFQNAFELASFFWFWW. Over 388-406 the chain is Extracellular; it reads QFGYNSCFLRNHLLVYLRL. Residues 407-427 form a helical membrane-spanning segment; the sequence is ILGFSGQFLCSYSTLPLYALV. Over 428–554 the chain is Cytoplasmic; it reads TQMGTNYKAA…SSSLPMRREC (127 aa). The calmodulin-binding stretch occupies residues 441–462; that stretch reads QRVRETINGWGKATRRKRRHGL.

It belongs to the MLO family.

It localises to the membrane. Its function is as follows. May be involved in modulation of pathogen defense and leaf cell death. Activity seems to be regulated by Ca(2+)-dependent calmodulin binding and seems not to require heterotrimeric G proteins. In Arabidopsis thaliana (Mouse-ear cress), this protein is MLO-like protein 14 (MLO14).